The chain runs to 84 residues: Cytochrome b559 subunit alpha (84 aa).

Residues 22–36 form a helical membrane-spanning segment; sequence VIHSITIPSLFVAGW. His-24 serves as a coordination point for heme.

It belongs to the PsbE/PsbF family. As to quaternary structure, heterodimer of an alpha subunit and a beta subunit. PSII is composed of 1 copy each of membrane proteins PsbA, PsbB, PsbC, PsbD, PsbE, PsbF, PsbH, PsbI, PsbJ, PsbK, PsbL, PsbM, PsbT, PsbX, PsbY, PsbZ, Psb30/Ycf12, at least 3 peripheral proteins of the oxygen-evolving complex and a large number of cofactors. It forms dimeric complexes. Requires heme b as cofactor.

Its subcellular location is the plastid. The protein resides in the chloroplast thylakoid membrane. Its function is as follows. This b-type cytochrome is tightly associated with the reaction center of photosystem II (PSII). PSII is a light-driven water:plastoquinone oxidoreductase that uses light energy to abstract electrons from H(2)O, generating O(2) and a proton gradient subsequently used for ATP formation. It consists of a core antenna complex that captures photons, and an electron transfer chain that converts photonic excitation into a charge separation. This is Cytochrome b559 subunit alpha from Gracilaria tenuistipitata var. liui (Red alga).